The sequence spans 149 residues: UPF0179 protein Hlac_2319 (149 aa).

The protein belongs to the UPF0179 family.

This is UPF0179 protein Hlac_2319 from Halorubrum lacusprofundi (strain ATCC 49239 / DSM 5036 / JCM 8891 / ACAM 34).